The sequence spans 391 residues: Lipid-A-disaccharide synthase (391 aa).

Belongs to the LpxB family.

It catalyses the reaction a lipid X + a UDP-2-N,3-O-bis[(3R)-3-hydroxyacyl]-alpha-D-glucosamine = a lipid A disaccharide + UDP + H(+). Its pathway is bacterial outer membrane biogenesis; LPS lipid A biosynthesis. Condensation of UDP-2,3-diacylglucosamine and 2,3-diacylglucosamine-1-phosphate to form lipid A disaccharide, a precursor of lipid A, a phosphorylated glycolipid that anchors the lipopolysaccharide to the outer membrane of the cell. This chain is Lipid-A-disaccharide synthase, found in Rickettsia akari (strain Hartford).